The primary structure comprises 165 residues: 2-C-methyl-D-erythritol 2,4-cyclodiphosphate synthase (165 aa).

Residues aspartate 8 and histidine 10 each coordinate a divalent metal cation. 4-CDP-2-C-methyl-D-erythritol 2-phosphate is bound by residues 8–10 (DVH) and 34–35 (HS). Histidine 42 contributes to the a divalent metal cation binding site. 4-CDP-2-C-methyl-D-erythritol 2-phosphate is bound by residues 56–58 (DIG), 61–65 (FPDTD), 100–106 (AQAPKMA), 132–135 (TTTE), phenylalanine 139, and arginine 142.

The protein belongs to the IspF family. As to quaternary structure, homotrimer. Requires a divalent metal cation as cofactor.

It carries out the reaction 4-CDP-2-C-methyl-D-erythritol 2-phosphate = 2-C-methyl-D-erythritol 2,4-cyclic diphosphate + CMP. It functions in the pathway isoprenoid biosynthesis; isopentenyl diphosphate biosynthesis via DXP pathway; isopentenyl diphosphate from 1-deoxy-D-xylulose 5-phosphate: step 4/6. Involved in the biosynthesis of isopentenyl diphosphate (IPP) and dimethylallyl diphosphate (DMAPP), two major building blocks of isoprenoid compounds. Catalyzes the conversion of 4-diphosphocytidyl-2-C-methyl-D-erythritol 2-phosphate (CDP-ME2P) to 2-C-methyl-D-erythritol 2,4-cyclodiphosphate (ME-CPP) with a corresponding release of cytidine 5-monophosphate (CMP). In Pectobacterium atrosepticum (strain SCRI 1043 / ATCC BAA-672) (Erwinia carotovora subsp. atroseptica), this protein is 2-C-methyl-D-erythritol 2,4-cyclodiphosphate synthase.